The chain runs to 445 residues: Putative H/ACA ribonucleoprotein complex subunit 4 (445 aa).

Residues 1 to 32 (MGKKDKRSKLEGDDLAEAQQKGSFQLPSSNET) form a disordered region. The segment covering 20 to 32 (QKGSFQLPSSNET) has biased composition (polar residues). Asp-113 functions as the Nucleophile in the catalytic mechanism. Positions 284–359 (HKRVVVKDSC…VVAKSKRVIM (76 aa)) constitute a PUA domain. A disordered region spans residues 386–445 (LDKFGKPNDTTPKSWAKEYVQTSTKKEVKKEETPDEEEEEAPKKKSKKSKKQESSDSDSD).

This sequence belongs to the pseudouridine synthase TruB family. Component of the small nucleolar ribonucleoprotein particle containing H/ACA-type snoRNAs (H/ACA snoRNPs).

It is found in the nucleus. Its subcellular location is the nucleolus. It catalyses the reaction a uridine in RNA = a pseudouridine in RNA. Functionally, plays a central role in ribosomal RNA processing. Probable catalytic subunit of H/ACA small nucleolar ribonucleoprotein (H/ACA snoRNP) complex, which catalyzes pseudouridylation of rRNA. This involves the isomerization of uridine such that the ribose is subsequently attached to C5, instead of the normal N1. Pseudouridine ('psi') residues may serve to stabilize the conformation of rRNAs. This is Putative H/ACA ribonucleoprotein complex subunit 4 from Caenorhabditis elegans.